A 465-amino-acid polypeptide reads, in one-letter code: uncharacterized protein (465 aa).

The segment covering 1-15 (MEKNYIFENSIYKDE) has biased composition (basic and acidic residues). Disordered stretches follow at residues 1 to 31 (MEKN…NNSS) and 288 to 320 (QLEK…EQLP).

This is an uncharacterized protein from Dictyostelium discoideum (Social amoeba).